Reading from the N-terminus, the 100-residue chain is NADH-quinone oxidoreductase subunit K (100 aa).

The next 3 helical transmembrane spans lie at 3–23 (PTSY…VGVI), 29–49 (LVLF…LVTF), and 60–80 (IVVF…LALL).

It belongs to the complex I subunit 4L family. As to quaternary structure, NDH-1 is composed of 14 different subunits. Subunits NuoA, H, J, K, L, M, N constitute the membrane sector of the complex.

It is found in the cell membrane. It carries out the reaction a quinone + NADH + 5 H(+)(in) = a quinol + NAD(+) + 4 H(+)(out). In terms of biological role, NDH-1 shuttles electrons from NADH, via FMN and iron-sulfur (Fe-S) centers, to quinones in the respiratory chain. The immediate electron acceptor for the enzyme in this species is believed to be ubiquinone. Couples the redox reaction to proton translocation (for every two electrons transferred, four hydrogen ions are translocated across the cytoplasmic membrane), and thus conserves the redox energy in a proton gradient. The protein is NADH-quinone oxidoreductase subunit K of Roseiflexus castenholzii (strain DSM 13941 / HLO8).